Consider the following 90-residue polypeptide: Putative sodium channel toxin Ts35 (90 aa).

Positions 1 to 22 (QDEVGLGSCSVIFVVGNEEGEA) are cleaved as a signal peptide. An LCN-type CS-alpha/beta domain is found at 23–87 (KDGYAVGGDR…WGNPTLGPCL (65 aa)). 4 disulfides stabilise this stretch: Cys33/Cys86, Cys37/Cys61, Cys46/Cys66, and Cys50/Cys68.

It belongs to the long (4 C-C) scorpion toxin superfamily. Sodium channel inhibitor family. In terms of tissue distribution, expressed by the venom gland.

The protein localises to the secreted. Its function is as follows. Putative sodium channel toxin. The polypeptide is Putative sodium channel toxin Ts35 (Tityus serrulatus (Brazilian scorpion)).